The chain runs to 291 residues: Meiosis-specific protein SPO13 (291 aa).

Disordered regions lie at residues 1–30, 116–143, and 271–291; these read MAPRKRFRLLELGSPTHSKRKVQKPLQEKT, SFDNSLRFEDIEQPPKSTSTPVLSQSSQ, and CSDYESSGQNATYNDSESSLN. A Nuclear localization signal motif is present at residues 3 to 6; it reads PRKR. A compositionally biased stretch (basic and acidic residues) spans 116-125; that stretch reads SFDNSLRFED. Polar residues predominate over residues 130 to 143; sequence PKSTSTPVLSQSSQ.

Its subcellular location is the nucleus. Its function is as follows. Required for meiosis I segmentation. Probably acts as a regulator of kinetochore function during meiosis I: required both for mono-orientation of kinetochores on sister chromosomes and protection of centromeric cohesin from separase-mediated cleavage. The polypeptide is Meiosis-specific protein SPO13 (SPO13) (Saccharomyces cerevisiae (strain ATCC 204508 / S288c) (Baker's yeast)).